The chain runs to 884 residues: Formin-like protein 9 (884 aa).

A signal peptide spans 1–19 (MGMAMRCVLVLFSVSPVLL). A helical membrane pass occupies residues 140-160 (IVALGVVGLCLVVLGVVIAAF). Disordered regions lie at residues 179 to 204 (FHHG…PDPL), 295 to 318 (THDS…LSPK), and 403 to 473 (TMTN…PLPR). Low complexity predominate over residues 300–310 (SDSSYQSLSPD). Residues 429 to 443 (KPAPPPPPQKNPPPN) show a composition bias toward pro residues. The FH2 domain maps to 464-884 (VGKDGSPLPR…QTLNLVLPLK (421 aa)).

The protein belongs to the formin-like family. Class-I subfamily.

It is found in the membrane. This is Formin-like protein 9 (FH9) from Oryza sativa subsp. indica (Rice).